We begin with the raw amino-acid sequence, 503 residues long: Phenylalanine--tRNA ligase alpha subunit (503 aa).

An N-acetylserine modification is found at S2. Residues S2–I173 are contains the major tRNA-Phe binding sites. L-phenylalanine-binding positions include T333, Q374 to E376, and Y414. E416 is a Mg(2+) binding site. F440 lines the L-phenylalanine pocket.

This sequence belongs to the class-II aminoacyl-tRNA synthetase family. Phe-tRNA synthetase alpha subunit type 2 subfamily. In terms of assembly, tetramer of two alpha and two beta subunits. The cofactor is Mg(2+).

It is found in the cytoplasm. It catalyses the reaction tRNA(Phe) + L-phenylalanine + ATP = L-phenylalanyl-tRNA(Phe) + AMP + diphosphate + H(+). This Saccharomyces cerevisiae (strain ATCC 204508 / S288c) (Baker's yeast) protein is Phenylalanine--tRNA ligase alpha subunit (FRS2).